The following is a 497-amino-acid chain: Taxane 10-beta-hydroxylase (497 aa).

Residue C443 participates in heme binding.

It belongs to the cytochrome P450 family. The cofactor is heme.

The enzyme catalyses taxa-4(20),11-dien-5alpha-yl acetate + reduced [NADPH--hemoprotein reductase] + O2 = 10beta-hydroxytaxa-4(20),11-dien-5alpha-yl acetate + oxidized [NADPH--hemoprotein reductase] + H2O + H(+). It participates in alkaloid biosynthesis; taxol biosynthesis; 10-deacetyl-2-debenzoylbaccatin III from taxa-4(20),11-dien-5alpha-ol: step 2/3. Involved in the transformation of a taxadienyl acetate by hydroxylation at C10 to yield taxadien-5-alpha-acetoxy-10-beta-ol. This is Taxane 10-beta-hydroxylase (CYP725A1) from Taxus cuspidata (Japanese yew).